The primary structure comprises 302 residues: NAD kinase 1 (302 aa).

Asp-67 (proton acceptor) is an active-site residue. Residues 67–68, Arg-72, 148–149, Lys-178, and Asp-180 each bind NAD(+); these read DG and ND.

Belongs to the NAD kinase family. Requires a divalent metal cation as cofactor.

The protein resides in the cytoplasm. It carries out the reaction NAD(+) + ATP = ADP + NADP(+) + H(+). Involved in the regulation of the intracellular balance of NAD and NADP, and is a key enzyme in the biosynthesis of NADP. Catalyzes specifically the phosphorylation on 2'-hydroxyl of the adenosine moiety of NAD to yield NADP. The polypeptide is NAD kinase 1 (Prochlorococcus marinus (strain NATL2A)).